The sequence spans 330 residues: (4-{4-[2-(gamma-L-glutamylamino)ethyl]phenoxymethyl}furan-2-yl)methanamine synthase (330 aa).

It belongs to the MfnF family.

It carries out the reaction gamma-L-glutamyltyramine + [5-(aminomethyl)furan-3-yl]methyl diphosphate = (4-{4-[2-(gamma-L-glutamylamino)ethyl]phenoxymethyl}furan-2-yl)methanamine + diphosphate. It functions in the pathway cofactor biosynthesis; methanofuran biosynthesis. Catalyzes the condensation between 5-(aminomethyl)-3-furanmethanol diphosphate (F1-PP) and gamma-glutamyltyramine to produce APMF-Glu. This is (4-{4-[2-(gamma-L-glutamylamino)ethyl]phenoxymethyl}furan-2-yl)methanamine synthase from Methanocaldococcus jannaschii (strain ATCC 43067 / DSM 2661 / JAL-1 / JCM 10045 / NBRC 100440) (Methanococcus jannaschii).